A 970-amino-acid polypeptide reads, in one-letter code: Transcriptional activator protein DAL81 (970 aa).

3 disordered regions span residues 1–44 (MDPH…NHDI), 64–95 (NILR…QQQS), and 118–140 (DNVS…NNDI). Low complexity-rich tracts occupy residues 15–41 (TKSV…NNSN), 73–94 (QQQQ…QQQQ), and 121–140 (SNSA…NNDI). The segment at residues 150 to 179 (CNQCRLKKTKCNYFPDLGNCLECETSRTKC) is a DNA-binding region (zn(2)-C6 fungal-type). Residues 807–823 (SFPNGTTSTTTPVNPTS) show a composition bias toward low complexity. Positions 807 to 970 (SFPNGTTSTT…VTINTRETPL (164 aa)) are disordered. 2 stretches are compositionally biased toward polar residues: residues 824-836 (RQTQ…SPAI) and 858-870 (KTSQ…TPSH). Serine 833 carries the phosphoserine modification. Positions 875–894 (PPSNTSSPRVNSSTNVNSNT) are enriched in low complexity. Residues 895-906 (QMNASPLTSINE) are compositionally biased toward polar residues. The segment covering 907–938 (TRQESGDAADEKTAGRERTANEESSTELKDDN) has biased composition (basic and acidic residues). Polar residues-rich tracts occupy residues 939–954 (PNSN…QTIK) and 961–970 (VTINTRETPL).

It is found in the nucleus. Positive regulation of genes required for catabolism of GABA (UGA4, UGA1, and UGA2), urea (DUR1 and DUR2), arginine and allantoin. The polypeptide is Transcriptional activator protein DAL81 (DAL81) (Saccharomyces cerevisiae (strain ATCC 204508 / S288c) (Baker's yeast)).